The following is a 144-amino-acid chain: Transcriptional regulator MraZ (144 aa).

SpoVT-AbrB domains lie at 5-50 (TFNH…ALPQ) and 81-124 (AHEV…DRAA).

Belongs to the MraZ family. As to quaternary structure, forms oligomers.

The protein resides in the cytoplasm. Its subcellular location is the nucleoid. The sequence is that of Transcriptional regulator MraZ from Anaeromyxobacter dehalogenans (strain 2CP-C).